A 116-amino-acid chain; its full sequence is uncharacterized protein (116 aa).

Residues 97 to 116 (AKGKGNEGREEAEEASGKSK) form a disordered region. The span at 100 to 116 (KGNEGREEAEEASGKSK) shows a compositional bias: basic and acidic residues.

This sequence belongs to the UPF0440 family.

This is an uncharacterized protein from Pyrococcus horikoshii (strain ATCC 700860 / DSM 12428 / JCM 9974 / NBRC 100139 / OT-3).